The following is a 921-amino-acid chain: Probable dipeptidyl-aminopeptidase B (921 aa).

The disordered stretch occupies residues 1-87 (MDAPATASRQ…EADTNDLETG (87 aa)). At 1–108 (MDAPATASRQ…RVGVDRGLKK (108 aa)) the chain is on the cytoplasmic side. The span at 22-33 (SSLSTVSTTSLV) shows a compositional bias: low complexity. Residues 35–45 (DRLHEHNEKSY) show a composition bias toward basic and acidic residues. Residues 66–75 (PDDDDDDDES) show a composition bias toward acidic residues. Residues 109 to 129 (VILILAAAFLFAWGAALFVFL) form a helical; Signal-anchor for type II membrane protein membrane-spanning segment. Over 130-921 (SNKSYKHAST…KPIVEPKARV (792 aa)) the chain is Vacuolar. N-linked (GlcNAc...) asparagine glycans are attached at residues N131, N364, and N577. The active-site Charge relay system is the S768. A glycan (N-linked (GlcNAc...) asparagine) is linked at N827. Active-site charge relay system residues include D845 and H878.

Belongs to the peptidase S9B family.

It is found in the vacuole membrane. The enzyme catalyses Release of an N-terminal dipeptide, Xaa-Yaa-|-Zaa-, from a polypeptide, preferentially when Yaa is Pro, provided Zaa is neither Pro nor hydroxyproline.. Functionally, type IV dipeptidyl-peptidase which removes N-terminal dipeptides sequentially from polypeptides having unsubstituted N-termini provided that the penultimate residue is proline. In Colletotrichum graminicola (strain M1.001 / M2 / FGSC 10212) (Maize anthracnose fungus), this protein is Probable dipeptidyl-aminopeptidase B (DAPB).